A 193-amino-acid chain; its full sequence is Corrinoid adenosyltransferase (193 aa).

ATP-binding positions include 10-18 (TRTGDDGTT), Lys28, 137-142 (RRAERS), and Asn163.

It belongs to the Cob(I)alamin adenosyltransferase family.

Its subcellular location is the cytoplasm. It carries out the reaction 2 cob(II)yrinate a,c diamide + reduced [electron-transfer flavoprotein] + 2 ATP = 2 adenosylcob(III)yrinate a,c-diamide + 2 triphosphate + oxidized [electron-transfer flavoprotein] + 3 H(+). The catalysed reaction is 2 cob(II)alamin + reduced [electron-transfer flavoprotein] + 2 ATP = 2 adenosylcob(III)alamin + 2 triphosphate + oxidized [electron-transfer flavoprotein] + 3 H(+). It functions in the pathway cofactor biosynthesis; adenosylcobalamin biosynthesis; adenosylcobalamin from cob(II)yrinate a,c-diamide: step 2/7. This Mycobacterium bovis (strain ATCC BAA-935 / AF2122/97) protein is Corrinoid adenosyltransferase.